Reading from the N-terminus, the 206-residue chain is Small ribosomal subunit protein uS4 (206 aa).

The S4 RNA-binding domain maps to 96–156 (GRLDNVVYRM…EKSKKQARIK (61 aa)).

Belongs to the universal ribosomal protein uS4 family. In terms of assembly, part of the 30S ribosomal subunit. Contacts protein S5. The interaction surface between S4 and S5 is involved in control of translational fidelity.

Functionally, one of the primary rRNA binding proteins, it binds directly to 16S rRNA where it nucleates assembly of the body of the 30S subunit. In terms of biological role, with S5 and S12 plays an important role in translational accuracy. This chain is Small ribosomal subunit protein uS4, found in Mannheimia succiniciproducens (strain KCTC 0769BP / MBEL55E).